A 439-amino-acid polypeptide reads, in one-letter code: Diaminopimelate decarboxylase (439 aa).

The residue at position 66 (K66) is an N6-(pyridoxal phosphate)lysine. Residues G248 and 290 to 293 (EPGR) contribute to the pyridoxal 5'-phosphate site. Residues R293, R330, and Y334 each contribute to the substrate site. The active-site Proton donor is the C361. E362 and Y390 together coordinate substrate. Y390 contributes to the pyridoxal 5'-phosphate binding site.

The protein belongs to the Orn/Lys/Arg decarboxylase class-II family. LysA subfamily. In terms of assembly, homodimer. The cofactor is pyridoxal 5'-phosphate.

It carries out the reaction meso-2,6-diaminopimelate + H(+) = L-lysine + CO2. The protein operates within amino-acid biosynthesis; L-lysine biosynthesis via DAP pathway; L-lysine from DL-2,6-diaminopimelate: step 1/1. Functionally, specifically catalyzes the decarboxylation of meso-diaminopimelate (meso-DAP) to L-lysine. This chain is Diaminopimelate decarboxylase, found in Halalkalibacterium halodurans (strain ATCC BAA-125 / DSM 18197 / FERM 7344 / JCM 9153 / C-125) (Bacillus halodurans).